Consider the following 66-residue polypeptide: Repressor protein C4 (66 aa).

Repressor of the ant/reb gene. The polypeptide is Repressor protein C4 (C4) (Escherichia phage P1 (Bacteriophage P1)).